A 169-amino-acid chain; its full sequence is Cytochrome c oxidase subunit 4 isoform 1, mitochondrial (169 aa).

A mitochondrion-targeting transit peptide spans 1–22 (MLATRALSLIGKRAISTSVCLR). Over 23–98 (AHGSVVKSED…SFAEMNKGTN (76 aa)) the chain is Mitochondrial matrix. Residue K29 is modified to N6-acetyllysine; alternate. Position 29 is an N6-succinyllysine; alternate (K29). Residue K53 is modified to N6-acetyllysine. A phosphoserine mark is found at S56 and S58. The residue at position 60 (K60) is an N6-acetyllysine; alternate. K60 is subject to N6-succinyllysine; alternate. K67 bears the N6-acetyllysine mark. A helical transmembrane segment spans residues 99 to 124 (EWKTVVGLAMFFIGFTALVLIWEKSY). Topologically, residues 125-169 (VYGPIPHTFDRDWVAMQTKRMLDMKVNPIQGFSAKWDYNKNEWKK) are mitochondrial intermembrane.

The protein belongs to the cytochrome c oxidase IV family. Component of the cytochrome c oxidase (complex IV, CIV), a multisubunit enzyme composed of 14 subunits. The complex is composed of a catalytic core of 3 subunits MT-CO1, MT-CO2 and MT-CO3, encoded in the mitochondrial DNA, and 11 supernumerary subunits COX4I, COX5A, COX5B, COX6A, COX6B, COX6C, COX7A, COX7B, COX7C, COX8 and NDUFA4, which are encoded in the nuclear genome. The complex exists as a monomer or a dimer and forms supercomplexes (SCs) in the inner mitochondrial membrane with NADH-ubiquinone oxidoreductase (complex I, CI) and ubiquinol-cytochrome c oxidoreductase (cytochrome b-c1 complex, complex III, CIII), resulting in different assemblies (supercomplex SCI(1)III(2)IV(1) and megacomplex MCI(2)III(2)IV(2)). Interacts with PHB2; the interaction decreases in absence of SPHK2. Interacts with AFG1L. Interacts with ABCB7; this interaction allows the regulation of cellular iron homeostasis and cellular reactive oxygen species (ROS) levels in cardiomyocytes. Interacts with FLVCR2; this interaction occurs in the absence of heme and is disrupted upon heme binding. Interacts with IRGC.

Its subcellular location is the mitochondrion inner membrane. It participates in energy metabolism; oxidative phosphorylation. Functionally, component of the cytochrome c oxidase, the last enzyme in the mitochondrial electron transport chain which drives oxidative phosphorylation. The respiratory chain contains 3 multisubunit complexes succinate dehydrogenase (complex II, CII), ubiquinol-cytochrome c oxidoreductase (cytochrome b-c1 complex, complex III, CIII) and cytochrome c oxidase (complex IV, CIV), that cooperate to transfer electrons derived from NADH and succinate to molecular oxygen, creating an electrochemical gradient over the inner membrane that drives transmembrane transport and the ATP synthase. Cytochrome c oxidase is the component of the respiratory chain that catalyzes the reduction of oxygen to water. Electrons originating from reduced cytochrome c in the intermembrane space (IMS) are transferred via the dinuclear copper A center (CU(A)) of subunit 2 and heme A of subunit 1 to the active site in subunit 1, a binuclear center (BNC) formed by heme A3 and copper B (CU(B)). The BNC reduces molecular oxygen to 2 water molecules using 4 electrons from cytochrome c in the IMS and 4 protons from the mitochondrial matrix. This Rattus norvegicus (Rat) protein is Cytochrome c oxidase subunit 4 isoform 1, mitochondrial (Cox4i1).